The following is a 297-amino-acid chain: Light-independent protochlorophyllide reductase iron-sulfur ATP-binding protein (297 aa).

ATP is bound by residues glycine 41–threonine 46 and lysine 70. Position 45 (serine 45) interacts with Mg(2+). 2 residues coordinate [4Fe-4S] cluster: cysteine 126 and cysteine 160. Residues asparagine 211–arginine 212 and proline 235–leucine 237 each bind ATP.

It belongs to the NifH/BchL/ChlL family. In terms of assembly, homodimer. Protochlorophyllide reductase is composed of three subunits; BchL, BchN and BchB. Requires [4Fe-4S] cluster as cofactor.

It catalyses the reaction chlorophyllide a + oxidized 2[4Fe-4S]-[ferredoxin] + 2 ADP + 2 phosphate = protochlorophyllide a + reduced 2[4Fe-4S]-[ferredoxin] + 2 ATP + 2 H2O. It participates in porphyrin-containing compound metabolism; bacteriochlorophyll biosynthesis (light-independent). In terms of biological role, component of the dark-operative protochlorophyllide reductase (DPOR) that uses Mg-ATP and reduced ferredoxin to reduce ring D of protochlorophyllide (Pchlide) to form chlorophyllide a (Chlide). This reaction is light-independent. The L component serves as a unique electron donor to the NB-component of the complex, and binds Mg-ATP. This is Light-independent protochlorophyllide reductase iron-sulfur ATP-binding protein from Methylorubrum populi (strain ATCC BAA-705 / NCIMB 13946 / BJ001) (Methylobacterium populi).